The following is a 469-amino-acid chain: UDP-N-acetylmuramate--L-alanine ligase (469 aa).

ATP is bound at residue G122–T128.

This sequence belongs to the MurCDEF family.

It localises to the cytoplasm. The catalysed reaction is UDP-N-acetyl-alpha-D-muramate + L-alanine + ATP = UDP-N-acetyl-alpha-D-muramoyl-L-alanine + ADP + phosphate + H(+). It participates in cell wall biogenesis; peptidoglycan biosynthesis. Cell wall formation. In Legionella pneumophila (strain Lens), this protein is UDP-N-acetylmuramate--L-alanine ligase.